A 160-amino-acid polypeptide reads, in one-letter code: uncharacterized protein (160 aa).

The N-acetyltransferase domain maps to 9–151 (LLINYKTLEK…GENPLIWLPE (143 aa)).

This is an uncharacterized protein from Oceanobacillus iheyensis (strain DSM 14371 / CIP 107618 / JCM 11309 / KCTC 3954 / HTE831).